The sequence spans 354 residues: NADH-quinone oxidoreductase subunit H (354 aa).

8 helical membrane passes run 22 to 42 (ILIR…YLIL), 91 to 111 (YLIA…VIPF), 124 to 144 (LLYV…AGWA), 168 to 188 (MGFA…SAIV), 203 to 223 (ILSW…ISGV), 255 to 275 (LFFL…ALMF), 291 to 311 (IPGF…FIWI), and 326 to 346 (LGWK…AIWI).

It belongs to the complex I subunit 1 family. As to quaternary structure, NDH-1 is composed of 14 different subunits. Subunits NuoA, H, J, K, L, M, N constitute the membrane sector of the complex.

It localises to the cell inner membrane. The catalysed reaction is a quinone + NADH + 5 H(+)(in) = a quinol + NAD(+) + 4 H(+)(out). NDH-1 shuttles electrons from NADH, via FMN and iron-sulfur (Fe-S) centers, to quinones in the respiratory chain. The immediate electron acceptor for the enzyme in this species is believed to be ubiquinone. Couples the redox reaction to proton translocation (for every two electrons transferred, four hydrogen ions are translocated across the cytoplasmic membrane), and thus conserves the redox energy in a proton gradient. This subunit may bind ubiquinone. This is NADH-quinone oxidoreductase subunit H from Cupriavidus necator (strain ATCC 17699 / DSM 428 / KCTC 22496 / NCIMB 10442 / H16 / Stanier 337) (Ralstonia eutropha).